The sequence spans 498 residues: Glycylpeptide N-tetradecanoyltransferase 2 (498 aa).

Positions 1-87 (MAEDSESAAS…QPPSKNSTIP (87 aa)) are disordered. The segment covering 15–32 (ELDDQDTCGIDGDNEEET) has biased composition (acidic residues). S38 carries the post-translational modification Phosphoserine. Positions 46-57 (KKKKKKQKRKKE) are enriched in basic residues. Over residues 61–72 (SGGTKSDSASDS) the composition is skewed to polar residues. Positions 117, 122, 250, 252, 258, 260, 261, and 262 each coordinate tetradecanoyl-CoA.

It belongs to the NMT family.

The protein localises to the cytoplasm. It is found in the membrane. It catalyses the reaction N-terminal glycyl-[protein] + tetradecanoyl-CoA = N-tetradecanoylglycyl-[protein] + CoA + H(+). The catalysed reaction is N-terminal glycyl-L-lysyl-[protein] + tetradecanoyl-CoA = N-terminal glycyl-(N(6)-tetradecanoyl)-L-lysyl-[protein] + CoA + H(+). Functionally, adds a myristoyl group to the N-terminal glycine residue of certain cellular and viral proteins. Also able to mediate N-terminal lysine myristoylation of proteins: catalyzes myristoylation of ARF6 on both 'Gly-2' and 'Lys-3'. Lysine myristoylation is required to maintain ARF6 on membranes during the GTPase cycle. The protein is Glycylpeptide N-tetradecanoyltransferase 2 (NMT2) of Bos taurus (Bovine).